Reading from the N-terminus, the 90-residue chain is UPF0386 protein Rru_A2144 (90 aa).

It belongs to the UPF0386 family.

This is UPF0386 protein Rru_A2144 from Rhodospirillum rubrum (strain ATCC 11170 / ATH 1.1.1 / DSM 467 / LMG 4362 / NCIMB 8255 / S1).